The sequence spans 467 residues: Uronate isomerase (467 aa).

Belongs to the metallo-dependent hydrolases superfamily. Uronate isomerase family.

It carries out the reaction D-glucuronate = D-fructuronate. The catalysed reaction is aldehydo-D-galacturonate = keto-D-tagaturonate. It functions in the pathway carbohydrate metabolism; pentose and glucuronate interconversion. The polypeptide is Uronate isomerase (Clostridium acetobutylicum (strain ATCC 824 / DSM 792 / JCM 1419 / IAM 19013 / LMG 5710 / NBRC 13948 / NRRL B-527 / VKM B-1787 / 2291 / W)).